The following is a 630-amino-acid chain: Angiotensin-converting enzyme-related protein (630 aa).

An N-terminal signal peptide occupies residues 1 to 22 (MGACNITVLLLVIMLWLPHGLS). The Peptidase M2 domain maps to 28-615 (SASVLEARRF…SRLGVPLGWG (588 aa)). Intrachain disulfides connect Cys-142–Cys-150 and Cys-344–Cys-362. A Zn(2+)-binding site is contributed by His-375. The Proton acceptor role is filled by Glu-376. Residues His-379 and Glu-403 each contribute to the Zn(2+) site. His-505 (proton donor) is an active-site residue. An intrachain disulfide couples Cys-530 to Cys-548.

It belongs to the peptidase M2 family. Zn(2+) serves as cofactor. Glycosylated.

The protein localises to the secreted. Its subcellular location is the extracellular space. The catalysed reaction is Release of a C-terminal dipeptide, oligopeptide-|-Xaa-Yaa, when Xaa is not Pro, and Yaa is neither Asp nor Glu. Thus, conversion of angiotensin I to angiotensin II, with increase in vasoconstrictor activity, but no action on angiotensin II.. Inhibited by captopril, lisinopril, trandolaprilat, fosinoprilat and enalaprilat. Functionally, may be involved in the specific maturation or degradation of a number of bioactive peptides. May have a role in the specification of heart progenitors. In Drosophila melanogaster (Fruit fly), this protein is Angiotensin-converting enzyme-related protein (Acer).